The chain runs to 121 residues: Large ribosomal subunit protein eL18 (121 aa).

It belongs to the eukaryotic ribosomal protein eL18 family.

This is Large ribosomal subunit protein eL18 from Methanoregula boonei (strain DSM 21154 / JCM 14090 / 6A8).